The following is a 243-amino-acid chain: Small ribosomal subunit protein uS5 (243 aa).

Residues 1–54 form a disordered region; it reads MSDNEKETQVAEETQNTQATAESSNNDERRGRRNNRGGEGRRGDRRGRREDNHE. The span at 11–24 shows a compositional bias: polar residues; the sequence is AEETQNTQATAESS. Residues 26 to 54 show a composition bias toward basic and acidic residues; the sequence is NDERRGRRNNRGGEGRRGDRRGRREDNHE. Positions 57–120 constitute an S5 DRBM domain; that stretch reads MLDRVVTINR…LDAKKHLFNV (64 aa).

This sequence belongs to the universal ribosomal protein uS5 family. Part of the 30S ribosomal subunit. Contacts proteins S4 and S8.

In terms of biological role, with S4 and S12 plays an important role in translational accuracy. Functionally, located at the back of the 30S subunit body where it stabilizes the conformation of the head with respect to the body. This Bifidobacterium animalis subsp. lactis (strain AD011) protein is Small ribosomal subunit protein uS5.